The sequence spans 236 residues: Orotidine 5'-phosphate decarboxylase (236 aa).

Residues Asp14, Lys36, 63–72 (DLKYHDIPNT), Thr122, Arg183, Gln192, Gly212, and Arg213 contribute to the substrate site. The active-site Proton donor is the Lys65.

This sequence belongs to the OMP decarboxylase family. Type 1 subfamily. As to quaternary structure, homodimer.

It carries out the reaction orotidine 5'-phosphate + H(+) = UMP + CO2. It participates in pyrimidine metabolism; UMP biosynthesis via de novo pathway; UMP from orotate: step 2/2. Catalyzes the decarboxylation of orotidine 5'-monophosphate (OMP) to uridine 5'-monophosphate (UMP). The protein is Orotidine 5'-phosphate decarboxylase of Halorhodospira halophila (strain DSM 244 / SL1) (Ectothiorhodospira halophila (strain DSM 244 / SL1)).